A 547-amino-acid chain; its full sequence is Carboxypeptidase N subunit 2 (547 aa).

A signal peptide spans 1–21; that stretch reads MFPGAWLCWVSLLLLARLTQP. Residues 22–49 form the LRRNT domain; sequence CPVGCDCFGREVFCSDEQLADIPPDIPP. Residues N74, N111, and N119 are each glycosylated (N-linked (GlcNAc...) asparagine). 12 LRR repeats span residues 98–119, 122–143, 146–167, 170–191, 194–215, 218–239, 242–263, 266–287, 290–311, 314–335, 338–359, and 362–383; these read RLQDLEITGSPVSNLSAHIFSN, SLEKLTLDFDRLAGLPEDLFCH, ILESLQLQGNQLRTLPGRLFQS, DLRTLNLAQNLLTQLPKGAFQS, GLQMLKLSNNMLARLPEGALGS, SLQELFLDGNAITELSPHLFSQ, SLEMLWLQHNAICHLPVSLFSS, NLTFLSLKDNALRTLPEGLFAH, GLLHLSLSYNQLETIPEGAFTN, RLVSLTLSHNAITDLPEHVFRN, QLVKLSLDSNNLTALHPALFHN, and RLQLLNLSRNQLTTLPGGIFDT. N-linked (GlcNAc...) asparagine glycosylation is found at N266 and N311. N-linked (GlcNAc...) asparagine glycans are attached at residues N348, N359, and N367. An LRRCT domain is found at 395–447; it reads NPWQCDCHLSYLTSWLRLYNNQISNTHTFCAGPAYLKGQLVPNLKQEQLICPV. Residue N520 is glycosylated (N-linked (GlcNAc...) asparagine).

In terms of assembly, tetramer of two catalytic chains and two glycosylated inactive chains.

The protein localises to the secreted. Its function is as follows. The 83 kDa subunit binds and stabilizes the catalytic subunit at 37 degrees Celsius and keeps it in circulation. Under some circumstances it may be an allosteric modifier of the catalytic subunit. The protein is Carboxypeptidase N subunit 2 (Cpn2) of Mus musculus (Mouse).